A 213-amino-acid chain; its full sequence is Urease accessory protein UreG (213 aa).

A GTP-binding site is contributed by 17–24 (GPVGSGKT).

This sequence belongs to the SIMIBI class G3E GTPase family. UreG subfamily. In terms of assembly, homodimer. UreD, UreF and UreG form a complex that acts as a GTP-hydrolysis-dependent molecular chaperone, activating the urease apoprotein by helping to assemble the nickel containing metallocenter of UreC. The UreE protein probably delivers the nickel.

It localises to the cytoplasm. In terms of biological role, facilitates the functional incorporation of the urease nickel metallocenter. This process requires GTP hydrolysis, probably effectuated by UreG. This chain is Urease accessory protein UreG, found in Delftia acidovorans (strain DSM 14801 / SPH-1).